The chain runs to 349 residues: Core protein VP7 (349 aa).

Asn-287 is a glycosylation site (N-linked (GlcNAc...) asparagine; by host).

This sequence belongs to the orbivirus VP7 family. As to quaternary structure, homotrimer that assemble in a complex of 260 capsomers on an inner scaffold composed of VP3.

The protein localises to the virion. In terms of biological role, the VP7 protein is one of the five proteins (with VP1, VP3, VP4, and VP6) which form the inner capsid of the virus. The protein is Core protein VP7 (Segment-7) of Antilocapra americana (Pronghorn).